The primary structure comprises 351 residues: Tetraacyldisaccharide 4'-kinase (351 aa).

61–68 provides a ligand contact to ATP; sequence TAGGTGKT.

This sequence belongs to the LpxK family.

The enzyme catalyses a lipid A disaccharide + ATP = a lipid IVA + ADP + H(+). It functions in the pathway glycolipid biosynthesis; lipid IV(A) biosynthesis; lipid IV(A) from (3R)-3-hydroxytetradecanoyl-[acyl-carrier-protein] and UDP-N-acetyl-alpha-D-glucosamine: step 6/6. In terms of biological role, transfers the gamma-phosphate of ATP to the 4'-position of a tetraacyldisaccharide 1-phosphate intermediate (termed DS-1-P) to form tetraacyldisaccharide 1,4'-bis-phosphate (lipid IVA). This is Tetraacyldisaccharide 4'-kinase from Xanthomonas campestris pv. campestris (strain 8004).